The sequence spans 114 residues: DNA-directed RNA polymerases II, IV and V subunit 9A (114 aa).

The Zn(2+) site is built by Cys-7, Cys-10, Cys-29, Cys-32, Cys-76, Cys-79, Cys-103, and Cys-108. A TFIIS-type zinc finger spans residues 72–113; it reads KAVRCSKCQHREAVFFQATARGEEGMTLFFVCCNPNCGHRWR.

It belongs to the archaeal RpoM/eukaryotic RPA12/RPB9/RPC11 RNA polymerase family. In terms of assembly, component of the RNA polymerase II, IV and V complexes. Interacts with NRPD1.

It is found in the nucleus. Its subcellular location is the nucleolus. Its function is as follows. DNA-dependent RNA polymerase catalyzes the transcription of DNA into RNA using the four ribonucleoside triphosphates as substrates. Component of RNA polymerase II which synthesizes mRNA precursors and many functional non-coding RNAs. Pol II is the central component of the basal RNA polymerase II transcription machinery. It is composed of mobile elements that move relative to each other. Component of RNA polymerases IV and V which mediate short-interfering RNAs (siRNA) accumulation and subsequent RNA-directed DNA methylation-dependent (RdDM) transcriptional gene silencing (TGS) of endogenous repeated sequences, including transposable elements. Required for RNA silencing. This is DNA-directed RNA polymerases II, IV and V subunit 9A (NRPB9A) from Arabidopsis thaliana (Mouse-ear cress).